A 580-amino-acid polypeptide reads, in one-letter code: Alpha-glucosidase (580 aa).

A signal peptide spans 1-19; sequence MRPLGALSLFALLATTVSG. Asn-102 and Asn-127 each carry an N-linked (GlcNAc...) asparagine glycan. The Nucleophile role is filled by Asp-224. The active-site Proton donor is the Glu-290. The N-linked (GlcNAc...) asparagine glycan is linked to Asn-501. The chain crosses the membrane as a helical span at residues 560–580; sequence AAAINLSIGLLLAIMARYIFV.

This sequence belongs to the glycosyl hydrolase 13 family. In terms of assembly, (Microbial infection) Binds to L.sphaericus BinB subunit of the binary toxin BinAB. In 4th-instar larvae produced in the brush border membranes of the gastric caeca and the posterior stomach cells (at protein level).

It localises to the membrane. It carries out the reaction Hydrolysis of terminal, non-reducing (1-&gt;4)-linked alpha-D-glucose residues with release of alpha-D-glucose.. In terms of biological role, probably an alpha-glucosidase, it has no alpha-amylase function. Functionally, (Microbial infection) Serves as the larval receptor for Lysinibacillus sphaericus BinB toxin. The polypeptide is Alpha-glucosidase (Culex pipiens (House mosquito)).